Consider the following 491-residue polypeptide: MESSAKRKMDPDNPDEGPSSKVPRPETPVTKATTFLQTMLRKEVNSQLSLGDPLFPELAEESLKTFEQVTEDCNENPEKDVLAELVKQIKVRVDMVRHRIKEHMLKKYTQTEEKFTGAFNMMGGCLQNALDILDKVHEPFEEMKCIGLTMQSMYENYIVPEDKREMWMACIKELHDVSKGAANKLGGALQAKARAKKDELRRKMMYMCYRNIEFFTKNSAFPKTTNGCSQAMAALQNLPQCSPDEIMAYAQKIFKILDEERDKVLTHIDHIFMDILTTCVETMCNEYKVTSDACMMTMYGGISLLSEFCRVLCCYVLEETSVMLAKRPLITKPEVISVMKRRIEEICMKVFAQYILGADPLRVCSPSVDDLRAIAEESDEEEAIVAYTLATAGVSSSDSLVSPPESPVPATIPLSSVIVAENSDQEESEQSDEEEEEGAQEEREDTVSVKSEPVSEIEEVAPEEEEDGAEEPTASGGKSTHPMVTRSKADQ.

Over residues 1-11 (MESSAKRKMDP) the composition is skewed to basic and acidic residues. The nuclear localization signal stretch occupies residues 1–24 (MESSAKRKMDPDNPDEGPSSKVPR). The interval 1-30 (MESSAKRKMDPDNPDEGPSSKVPRPETPVT) is disordered. Residues 132–346 (ILDKVHEPFE…SVMKRRIEEI (215 aa)) are interaction with host PML, interference with PML sumoylation and disruption of PML-associated nuclear bodies. The interaction with host STAT2 stretch occupies residues 373–445 (AIAEESDEEE…EEGAQEERED (73 aa)). Residues 410-420 (ATIPLSSVIVA) are modulation of STAT3/STAT1 signaling. Positions 410–445 (ATIPLSSVIVAENSDQEESEQSDEEEEEGAQEERED) are interaction with host STAT3. Positions 421-472 (ENSDQEESEQSDEEEEEGAQEEREDTVSVKSEPVSEIEEVAPEEEEDGAEEP) are acidic. The segment at 421–491 (ENSDQEESEQ…PMVTRSKADQ (71 aa)) is disordered. Residues 423 to 444 (SDQEESEQSDEEEEEGAQEERE) show a composition bias toward acidic residues. The interaction with host SUMO1 stretch occupies residues 449 to 452 (VKSE). A Glycyl lysine isopeptide (Lys-Gly) (interchain with G-Cter in SUMO) cross-link involves residue K450. Acidic residues predominate over residues 455–470 (SEIEEVAPEEEEDGAE). The chromosome-tethering domain (CTD), binding to histones stretch occupies residues 475-491 (SGGKSTHPMVTRSKADQ).

It belongs to the HHV-5 IE1 protein family. In terms of assembly, forms homodimers. Interacts with human p53/TP53; this interaction inhibits p53/TP53-dependent transactivation activity. Interacts with host STAT1. Interacts with host STAT2; this interaction promotes viral growth and counteracts the antiviral interferon response. May also interact with the host STAT1-STAT2 heterodimer. Interacts with host STAT3; this interaction leads to STAT3 nuclear accumulation and disruption of IL6-induced STAT3 phosphorylation. Interacts with host PML; this interaction inhibits host PML de novo sumoylation and probably inhibits PML regulation of type I and type II interferon-induced gene expression. Interacts with host DAXX. Interacts with host SP100. Interacts with host E2F1. Interacts with host RB1. Interacts with host HDAC1; this interaction inhibits histone deacetylation and promotes viral transcription. Interacts with host HDAC2; this interaction inhibits histone deacetylation and promotes viral transcription. Interacts with host HDAC3; this interaction inhibits histone deacetylation and promotes viral transcription. Interacts with host PLSCR1; this interaction inhibits IE1 transactivating activity. In terms of processing, sumoylated by host PML. Sumoylation abolishes the interaction with host STAT2 and thus the IE1-mediated repression of interferon-stimulated genes.

The protein localises to the host nucleus. In terms of biological role, plays an important role in transactivating viral early genes as well as activating its own promoter, probably by altering the viral chromatin structure. Expression of IE1 and IE2 proteins is critical for the establishment of lytic infection and reactivation from viral latency. Disrupts PML-associated ND10 nuclear bodies by interfering with host PML and SP100 sumoylation thereby altering the regulation of type I and type II interferon-induced gene expression. Promotes efficient viral growth by interacting with and directing host SP100 to degradation, leading to enhanced acetylation level of histones. In addition, functions in counteracting the host innate antiviral response. Inhibits the type I interferon pathway by directly interacting with and sequestrating host STAT2. Also targets type II interferon pathway by repressing IL6- and STAT3 target genes. Repression of STAT3 genes is due to STAT3 nuclear accumulation and disruption of IL6-induced STAT3 phosphorylation by IE1. This repression is followed by phosphorylation and activation of STAT1. Inhibits host ISG transcription by sequestering host ISGF3 in a PML- and STAT2- binding dependent manner. Alters host cell cycle progression, probably through its interaction with host E2F1 or RB1 that overcomes the RB1-mediated repression of E2F-responsive promoters. The sequence is that of Immediate early protein IE1 (UL123) from Human cytomegalovirus (strain AD169) (HHV-5).